Consider the following 120-residue polypeptide: Large ribosomal subunit protein uL18 (120 aa).

This sequence belongs to the universal ribosomal protein uL18 family. As to quaternary structure, part of the 50S ribosomal subunit; part of the 5S rRNA/L5/L18/L25 subcomplex. Contacts the 5S and 23S rRNAs.

Its function is as follows. This is one of the proteins that bind and probably mediate the attachment of the 5S RNA into the large ribosomal subunit, where it forms part of the central protuberance. The protein is Large ribosomal subunit protein uL18 of Methylobacterium sp. (strain 4-46).